The sequence spans 421 residues: Serine hydroxymethyltransferase (421 aa).

(6S)-5,6,7,8-tetrahydrofolate is bound by residues leucine 123 and 127–129; that span reads GHL. Residue lysine 232 is modified to N6-(pyridoxal phosphate)lysine.

It belongs to the SHMT family. As to quaternary structure, homodimer. Requires pyridoxal 5'-phosphate as cofactor.

It is found in the cytoplasm. It catalyses the reaction (6R)-5,10-methylene-5,6,7,8-tetrahydrofolate + glycine + H2O = (6S)-5,6,7,8-tetrahydrofolate + L-serine. It participates in one-carbon metabolism; tetrahydrofolate interconversion. The protein operates within amino-acid biosynthesis; glycine biosynthesis; glycine from L-serine: step 1/1. Functionally, catalyzes the reversible interconversion of serine and glycine with tetrahydrofolate (THF) serving as the one-carbon carrier. This reaction serves as the major source of one-carbon groups required for the biosynthesis of purines, thymidylate, methionine, and other important biomolecules. Also exhibits THF-independent aldolase activity toward beta-hydroxyamino acids, producing glycine and aldehydes, via a retro-aldol mechanism. The polypeptide is Serine hydroxymethyltransferase (Ehrlichia canis (strain Jake)).